The chain runs to 151 residues: Large ribosomal subunit protein bL9 (151 aa).

Belongs to the bacterial ribosomal protein bL9 family.

In terms of biological role, binds to the 23S rRNA. This chain is Large ribosomal subunit protein bL9, found in Kosmotoga olearia (strain ATCC BAA-1733 / DSM 21960 / TBF 19.5.1).